Reading from the N-terminus, the 926-residue chain is Probable Xaa-Pro aminopeptidase PTT_10145 (926 aa).

Asp-274, Asp-285, Glu-435, and Glu-476 together coordinate Mn(2+). 5 disordered regions span residues 505–538, 595–615, 668–696, 711–741, and 865–926; these read GNPG…PGIS, KRDS…LSPV, SSST…EEKH, IGQS…KAAT, and MPVL…FLTR. A compositionally biased stretch (polar residues) spans 506-515; sequence NPGTTEILNP. Basic and acidic residues-rich tracts occupy residues 685–696 and 719–730; these read SRQKSHTVEEKH and GPEERRRKAQSD. Over residues 887–897 the composition is skewed to polar residues; that stretch reads NNATNKRSMID. The span at 900 to 915 shows a compositional bias: basic and acidic residues; the sequence is PAERRTRPERPERPAR.

The protein belongs to the peptidase M24B family. It depends on Mn(2+) as a cofactor.

The enzyme catalyses Release of any N-terminal amino acid, including proline, that is linked to proline, even from a dipeptide or tripeptide.. Catalyzes the removal of a penultimate prolyl residue from the N-termini of peptides. The sequence is that of Probable Xaa-Pro aminopeptidase PTT_10145 from Pyrenophora teres f. teres (strain 0-1) (Barley net blotch fungus).